The primary structure comprises 255 residues: Hydroxylmethylpyrimidine kinase (255 aa).

Pyridoxal 5'-phosphate contacts are provided by Gly18, Gln43, and Asn110. Residue Gln43 participates in 4-amino-5-hydroxymethyl-2-methylpyrimidine binding. Cys195 and Cys207 are disulfide-bonded. Ser208 serves as a coordination point for pyridoxal 5'-phosphate.

It belongs to the ThiD family. In terms of assembly, homodimer. In terms of processing, crystals show a disulfide bond between Cys-195 and Cys-207. This disulfide is possibly an artifact of the purification and crystallization conditions. However, as it is adjacent to the conserved GSGC of the oxyanion hole, this disulfide may help to orient the backbone amides toward the oxanion intermediate.

The catalysed reaction is 4-amino-5-hydroxymethyl-2-methylpyrimidine + ATP = 4-amino-2-methyl-5-(phosphooxymethyl)pyrimidine + ADP + H(+). It functions in the pathway cofactor biosynthesis; thiamine diphosphate biosynthesis. Its activity is regulated as follows. Inhibited by pyridoxal phosphate at high micromolar concentrations. Functionally, catalyzes the phosphorylation of hydroxymethylpyrimidine (HMP) to hydroxymethylpyrimidine phosphate (HMP-P). Unlike other HMPKs, it cannot catalyze the phosphorylation of HMP-P to generate the diphosphate HMP-PP. Shows no activity with pyridoxal, pyridoxamine or pyridoxine. Does not show phosphatase activity. The polypeptide is Hydroxylmethylpyrimidine kinase (Acinetobacter baumannii (strain IS-123)).